We begin with the raw amino-acid sequence, 159 residues long: 3-hydroxyacyl-[acyl-carrier-protein] dehydratase FabZ (159 aa).

Residue histidine 58 is part of the active site.

Belongs to the thioester dehydratase family. FabZ subfamily.

The protein resides in the cytoplasm. It catalyses the reaction a (3R)-hydroxyacyl-[ACP] = a (2E)-enoyl-[ACP] + H2O. Functionally, involved in unsaturated fatty acids biosynthesis. Catalyzes the dehydration of short chain beta-hydroxyacyl-ACPs and long chain saturated and unsaturated beta-hydroxyacyl-ACPs. This chain is 3-hydroxyacyl-[acyl-carrier-protein] dehydratase FabZ, found in Helicobacter pylori (strain HPAG1).